The following is a 115-amino-acid chain: Large ribosomal subunit protein bL20c (115 aa).

It belongs to the bacterial ribosomal protein bL20 family.

The protein resides in the plastid. Its subcellular location is the chloroplast. Binds directly to 23S ribosomal RNA and is necessary for the in vitro assembly process of the 50S ribosomal subunit. It is not involved in the protein synthesizing functions of that subunit. This Mesostigma viride (Green alga) protein is Large ribosomal subunit protein bL20c (rpl20).